Reading from the N-terminus, the 106-residue chain is Large ribosomal subunit protein uL24 (106 aa).

Belongs to the universal ribosomal protein uL24 family. As to quaternary structure, part of the 50S ribosomal subunit.

In terms of biological role, one of two assembly initiator proteins, it binds directly to the 5'-end of the 23S rRNA, where it nucleates assembly of the 50S subunit. Functionally, one of the proteins that surrounds the polypeptide exit tunnel on the outside of the subunit. In Porphyromonas gingivalis (strain ATCC 33277 / DSM 20709 / CIP 103683 / JCM 12257 / NCTC 11834 / 2561), this protein is Large ribosomal subunit protein uL24.